A 160-amino-acid polypeptide reads, in one-letter code: Protein shisa-like-2B (160 aa).

Residues 65-85 (IGALIGLGIAALVLLAFVISV) form a helical membrane-spanning segment.

Belongs to the shisa family.

Its subcellular location is the membrane. This is Protein shisa-like-2B from Homo sapiens (Human).